A 101-amino-acid chain; its full sequence is MDIKIIKDKKNPLLNRRELDFIVKYEGSTPSRNDVRNKLAAMLNAPLELLVIQRIKTEYGMQESKGYAKLYEDADRMKQVEQEYVLKRNAVPGSETEGEEA.

It belongs to the eukaryotic ribosomal protein eS24 family.

This is Small ribosomal subunit protein eS24 from Methanosarcina mazei (strain ATCC BAA-159 / DSM 3647 / Goe1 / Go1 / JCM 11833 / OCM 88) (Methanosarcina frisia).